A 271-amino-acid polypeptide reads, in one-letter code: Protein PXR1 (271 aa).

2 disordered regions span residues 1-26 (MGLAAARNKQRFGLDPRNTTWSNNTS) and 149-233 (KKRP…DSAA). Residues 17–26 (RNTTWSNNTS) are compositionally biased toward polar residues. The region spanning 25–71 (TSRFGHKHLEKLGWKPGSGLGLVPDSTTSHIKVSIKDDNLGLGAKLK) is the G-patch domain. The segment covering 165-205 (KKTKKVKKEKKVKKVKKEKKEKKEKKDKKEKKVKKEKKEKK) has biased composition (basic residues). Basic and acidic residues predominate over residues 206-230 (EKKLKDKHSKDTNEITRDQMLKPRD).

This sequence belongs to the PINX1 family.

The protein resides in the nucleus. The protein localises to the nucleolus. Its function is as follows. Involved in rRNA-processing at A0, A1 and A2 sites and negatively regulates telomerase. The protein is Protein PXR1 (PXR1) of Kluyveromyces lactis (strain ATCC 8585 / CBS 2359 / DSM 70799 / NBRC 1267 / NRRL Y-1140 / WM37) (Yeast).